The following is a 345-amino-acid chain: Small ribosomal subunit biogenesis GTPase RsgA (345 aa).

The tract at residues 1–36 is disordered; it reads MSKNKLSKGQERRVQANHQRRLQQRERGAAHWDDQP. Over residues 23–34 the composition is skewed to basic and acidic residues; that stretch reads QQRERGAAHWDD. The CP-type G domain maps to 103 to 273; sequence RSVLTRPDVY…LIDSPGVREL (171 aa). GTP-binding positions include 159–162 and 213–221; these read NKID and GQSGVGKSS. Cys-297, Cys-302, His-304, and Cys-310 together coordinate Zn(2+).

This sequence belongs to the TRAFAC class YlqF/YawG GTPase family. RsgA subfamily. As to quaternary structure, monomer. Associates with 30S ribosomal subunit, binds 16S rRNA. It depends on Zn(2+) as a cofactor.

The protein resides in the cytoplasm. Its function is as follows. One of several proteins that assist in the late maturation steps of the functional core of the 30S ribosomal subunit. Helps release RbfA from mature subunits. May play a role in the assembly of ribosomal proteins into the subunit. Circularly permuted GTPase that catalyzes slow GTP hydrolysis, GTPase activity is stimulated by the 30S ribosomal subunit. The polypeptide is Small ribosomal subunit biogenesis GTPase RsgA (Sodalis glossinidius (strain morsitans)).